We begin with the raw amino-acid sequence, 370 residues long: Cytochrome b (370 aa).

Helical transmembrane passes span F25–V45, W69–I90, W105–L125, and F170–L190. H75 and H89 together coordinate heme b. H174 and H188 together coordinate heme b. H193 is a binding site for a ubiquinone. 4 helical membrane passes run Y218–F238, L280–H300, L312–T332, and F339–P358.

It belongs to the cytochrome b family. The cytochrome bc1 complex contains 3 respiratory subunits (MT-CYB, CYC1 and UQCRFS1), 2 core proteins (UQCRC1 and UQCRC2) and probably 6 low-molecular weight proteins. Heme b is required as a cofactor.

It localises to the mitochondrion inner membrane. Component of the ubiquinol-cytochrome c reductase complex (complex III or cytochrome b-c1 complex) that is part of the mitochondrial respiratory chain. The b-c1 complex mediates electron transfer from ubiquinol to cytochrome c. Contributes to the generation of a proton gradient across the mitochondrial membrane that is then used for ATP synthesis. The sequence is that of Cytochrome b (MT-CYB) from Chilabothrus striatus (Haitian boa constrictor).